The chain runs to 345 residues: Phosphoribosylformylglycinamidine cyclo-ligase (345 aa).

It belongs to the AIR synthase family.

The protein resides in the cytoplasm. The catalysed reaction is 2-formamido-N(1)-(5-O-phospho-beta-D-ribosyl)acetamidine + ATP = 5-amino-1-(5-phospho-beta-D-ribosyl)imidazole + ADP + phosphate + H(+). Its pathway is purine metabolism; IMP biosynthesis via de novo pathway; 5-amino-1-(5-phospho-D-ribosyl)imidazole from N(2)-formyl-N(1)-(5-phospho-D-ribosyl)glycinamide: step 2/2. The protein is Phosphoribosylformylglycinamidine cyclo-ligase of Histophilus somni (strain 129Pt) (Haemophilus somnus).